The following is a 323-amino-acid chain: tRNA-modifying protein YgfZ (323 aa).

Positions 29 and 182 each coordinate folate.

Belongs to the tRNA-modifying YgfZ family.

Its subcellular location is the cytoplasm. Functionally, folate-binding protein involved in regulating the level of ATP-DnaA and in the modification of some tRNAs. It is probably a key factor in regulatory networks that act via tRNA modification, such as initiation of chromosomal replication. This chain is tRNA-modifying protein YgfZ, found in Vibrio cholerae serotype O1 (strain ATCC 39541 / Classical Ogawa 395 / O395).